The primary structure comprises 1136 residues: Nitric oxide synthase, inducible (1136 aa).

Residues C107 and C112 each coordinate Zn(2+). C197 is a heme b binding site. Residues Q260, W369, Y370, and E374 each coordinate L-arginine. 4 residues coordinate (6R)-L-erythro-5,6,7,8-tetrahydrobiopterin: R378, V459, W460, and F473. Residue Y488 coordinates heme b. A calmodulin-binding region spans residues 512-532; the sequence is LSILAKAVLLASLLLQKTMAA. A Flavodoxin-like domain is found at 536–674; it reads VTVIYATETG…AFRTWAVTAF (139 aa). Positions 542, 543, 544, 546, 547, 588, 589, 625, 632, 658, and 662 each coordinate FMN. In terms of domain architecture, FAD-binding FR-type spans 727-967; sequence KNVIPMKLKF…VRSADGFRLP (241 aa). R747 serves as a coordination point for NADP(+). FAD-binding residues include H769, R903, Y905, S906, T921, A923, Y927, V940, C941, and S942. NADP(+) is bound by residues T981, R1014, S1043, R1044, K1050, Y1052, Q1054, and D1087.

This sequence belongs to the NOS family. Homodimer. Heme b is required as a cofactor. It depends on FAD as a cofactor. The cofactor is FMN. Requires (6R)-L-erythro-5,6,7,8-tetrahydrobiopterin as cofactor.

It is found in the cytoplasm. Its subcellular location is the cytosol. It carries out the reaction 2 L-arginine + 3 NADPH + 4 O2 + H(+) = 2 L-citrulline + 2 nitric oxide + 3 NADP(+) + 4 H2O. With respect to regulation, not stimulated by calcium/calmodulin. Produces nitric oxide (NO) which is a messenger molecule with diverse functions throughout the body. NO may serve as both a paracrine and autocrine signal for modulating osteoclast bone resorption. Also has nitrosylase activity and mediates cysteine S-nitrosylation of cytoplasmic target proteins such COX2. The protein is Nitric oxide synthase, inducible (NOS2) of Gallus gallus (Chicken).